Here is a 316-residue protein sequence, read N- to C-terminus: tRNA-dihydrouridine(16) synthase (316 aa).

FMN-binding positions include 7 to 9 (PME) and Q68. C98 (proton donor) is an active-site residue. FMN is bound by residues K139, 200–202 (NGE), and 224–225 (GR).

The protein belongs to the Dus family. DusC subfamily. FMN is required as a cofactor.

The catalysed reaction is 5,6-dihydrouridine(16) in tRNA + NADP(+) = uridine(16) in tRNA + NADPH + H(+). It catalyses the reaction 5,6-dihydrouridine(16) in tRNA + NAD(+) = uridine(16) in tRNA + NADH + H(+). Catalyzes the synthesis of 5,6-dihydrouridine (D), a modified base found in the D-loop of most tRNAs, via the reduction of the C5-C6 double bond in target uridines. Specifically modifies U16 in tRNAs. The protein is tRNA-dihydrouridine(16) synthase of Escherichia coli O157:H7.